Here is a 662-residue protein sequence, read N- to C-terminus: Bifunctional polymyxin resistance protein ArnA (662 aa).

The interval 1–307 (MTSKAVVFAY…ELGLVEGARL (307 aa)) is formyltransferase ArnAFT. Histidine 106 (proton donor; for formyltransferase activity) is an active-site residue. (6R)-10-formyltetrahydrofolate-binding positions include arginine 116 and 138 to 142 (IERAD). The dehydrogenase ArnADH stretch occupies residues 316–662 (RRTRVLILGV…EALREREAQA (347 aa)). Residues aspartate 349 and 370-371 (DI) contribute to the NAD(+) site. UDP-alpha-D-glucuronate contacts are provided by residues alanine 395, tyrosine 400, and 434-435 (TS). The Proton acceptor; for decarboxylase activity role is filled by glutamate 436. Residues arginine 462, asparagine 493, 527 to 536 (RLVDGGAQKR), and tyrosine 614 each bind UDP-alpha-D-glucuronate. Arginine 620 (proton donor; for decarboxylase activity) is an active-site residue.

The protein in the N-terminal section; belongs to the Fmt family. UDP-L-Ara4N formyltransferase subfamily. In the C-terminal section; belongs to the NAD(P)-dependent epimerase/dehydratase family. UDP-glucuronic acid decarboxylase subfamily. Homohexamer, formed by a dimer of trimers.

The catalysed reaction is UDP-alpha-D-glucuronate + NAD(+) = UDP-beta-L-threo-pentopyranos-4-ulose + CO2 + NADH. It catalyses the reaction UDP-4-amino-4-deoxy-beta-L-arabinose + (6R)-10-formyltetrahydrofolate = UDP-4-deoxy-4-formamido-beta-L-arabinose + (6S)-5,6,7,8-tetrahydrofolate + H(+). It participates in nucleotide-sugar biosynthesis; UDP-4-deoxy-4-formamido-beta-L-arabinose biosynthesis; UDP-4-deoxy-4-formamido-beta-L-arabinose from UDP-alpha-D-glucuronate: step 1/3. Its pathway is nucleotide-sugar biosynthesis; UDP-4-deoxy-4-formamido-beta-L-arabinose biosynthesis; UDP-4-deoxy-4-formamido-beta-L-arabinose from UDP-alpha-D-glucuronate: step 3/3. It functions in the pathway bacterial outer membrane biogenesis; lipopolysaccharide biosynthesis. Functionally, bifunctional enzyme that catalyzes the oxidative decarboxylation of UDP-glucuronic acid (UDP-GlcUA) to UDP-4-keto-arabinose (UDP-Ara4O) and the addition of a formyl group to UDP-4-amino-4-deoxy-L-arabinose (UDP-L-Ara4N) to form UDP-L-4-formamido-arabinose (UDP-L-Ara4FN). The modified arabinose is attached to lipid A and is required for resistance to polymyxin and cationic antimicrobial peptides. The polypeptide is Bifunctional polymyxin resistance protein ArnA (Pseudomonas aeruginosa (strain ATCC 15692 / DSM 22644 / CIP 104116 / JCM 14847 / LMG 12228 / 1C / PRS 101 / PAO1)).